Consider the following 241-residue polypeptide: UPF0173 metal-dependent hydrolase Haur_4333 (241 aa).

Belongs to the UPF0173 family.

The sequence is that of UPF0173 metal-dependent hydrolase Haur_4333 from Herpetosiphon aurantiacus (strain ATCC 23779 / DSM 785 / 114-95).